Reading from the N-terminus, the 574-residue chain is Egalitarian protein homolog (574 aa).

Residues 259-278 (LNEDGSENGSDEGEETNNNG) form a disordered region. The span at 262–273 (DGSENGSDEGEE) shows a compositional bias: acidic residues. The region spanning 312–414 (NMEKKVVGLD…SLLQHEKFNK (103 aa)) is the 3'-5' exonuclease domain.

In terms of assembly, component of a dynein-regulating complex composed of at least bicd-1, dlc-1 and egal-1.

Its subcellular location is the nucleus envelope. Part of a complex with bicd-1 and dlc-1, which is recruited to the nuclear envelope by unc-83, where in turn, it recruits dynein to the nuclear surface and regulates nuclear migration in hypodermal precursor cells. The sequence is that of Egalitarian protein homolog from Caenorhabditis elegans.